The primary structure comprises 208 residues: 3-isopropylmalate dehydratase small subunit 2 (208 aa).

Residues 163–208 (EGERLDNASTSAGHGHAGTPLGDDPAKEDGPRPEQASGHQKEEHHA) form a disordered region.

The protein belongs to the LeuD family. LeuD type 2 subfamily. Heterodimer of LeuC and LeuD.

The enzyme catalyses (2R,3S)-3-isopropylmalate = (2S)-2-isopropylmalate. The protein operates within amino-acid biosynthesis; L-leucine biosynthesis; L-leucine from 3-methyl-2-oxobutanoate: step 2/4. Its function is as follows. Catalyzes the isomerization between 2-isopropylmalate and 3-isopropylmalate, via the formation of 2-isopropylmaleate. This Deinococcus radiodurans (strain ATCC 13939 / DSM 20539 / JCM 16871 / CCUG 27074 / LMG 4051 / NBRC 15346 / NCIMB 9279 / VKM B-1422 / R1) protein is 3-isopropylmalate dehydratase small subunit 2 (leuD2).